A 278-amino-acid chain; its full sequence is Sulfur carrier protein FdhD (278 aa).

C113 serves as the catalytic Cysteine persulfide intermediate. Residue 251–256 (FCRNGR) coordinates Mo-bis(molybdopterin guanine dinucleotide).

Belongs to the FdhD family.

The protein resides in the cytoplasm. Its function is as follows. Required for formate dehydrogenase (FDH) activity. Acts as a sulfur carrier protein that transfers sulfur from IscS to the molybdenum cofactor prior to its insertion into FDH. The polypeptide is Sulfur carrier protein FdhD (Shewanella oneidensis (strain ATCC 700550 / JCM 31522 / CIP 106686 / LMG 19005 / NCIMB 14063 / MR-1)).